The sequence spans 246 residues: Pyridoxine 5'-phosphate synthase (246 aa).

Residue N12 coordinates 3-amino-2-oxopropyl phosphate. A 1-deoxy-D-xylulose 5-phosphate-binding site is contributed by 14-15; that stretch reads DH. R23 is a binding site for 3-amino-2-oxopropyl phosphate. The active-site Proton acceptor is H48. 1-deoxy-D-xylulose 5-phosphate-binding residues include R50 and H55. The active-site Proton acceptor is E75. T105 contacts 1-deoxy-D-xylulose 5-phosphate. Residue H196 is the Proton donor of the active site. 3-amino-2-oxopropyl phosphate-binding positions include G197 and 218–219; that span reads GH.

The protein belongs to the PNP synthase family. Homooctamer; tetramer of dimers.

It localises to the cytoplasm. It catalyses the reaction 3-amino-2-oxopropyl phosphate + 1-deoxy-D-xylulose 5-phosphate = pyridoxine 5'-phosphate + phosphate + 2 H2O + H(+). It functions in the pathway cofactor biosynthesis; pyridoxine 5'-phosphate biosynthesis; pyridoxine 5'-phosphate from D-erythrose 4-phosphate: step 5/5. Its function is as follows. Catalyzes the complicated ring closure reaction between the two acyclic compounds 1-deoxy-D-xylulose-5-phosphate (DXP) and 3-amino-2-oxopropyl phosphate (1-amino-acetone-3-phosphate or AAP) to form pyridoxine 5'-phosphate (PNP) and inorganic phosphate. The sequence is that of Pyridoxine 5'-phosphate synthase from Thiobacillus denitrificans (strain ATCC 25259 / T1).